The primary structure comprises 32 residues: Mu-theraphotoxin-Se1a (32 aa).

3 disulfides stabilise this stretch: Cys2–Cys17, Cys9–Cys22, and Cys16–Cys28.

Belongs to the neurotoxin 10 (Hwtx-1) family. In terms of tissue distribution, expressed by the venom gland.

It is found in the secreted. In terms of biological role, voltage-gated sodium channel Nav1.7/SCN9A inhibitor. The protein is Mu-theraphotoxin-Se1a of Selenocosmia effera (Tarantula spider).